We begin with the raw amino-acid sequence, 140 residues long: 3-hydroxyacyl-[acyl-carrier-protein] dehydratase FabZ (140 aa).

The active site involves His47.

It belongs to the thioester dehydratase family. FabZ subfamily.

It localises to the cytoplasm. The enzyme catalyses a (3R)-hydroxyacyl-[ACP] = a (2E)-enoyl-[ACP] + H2O. Involved in unsaturated fatty acids biosynthesis. Catalyzes the dehydration of short chain beta-hydroxyacyl-ACPs and long chain saturated and unsaturated beta-hydroxyacyl-ACPs. The chain is 3-hydroxyacyl-[acyl-carrier-protein] dehydratase FabZ from Streptococcus pneumoniae (strain 70585).